Here is a 29-residue protein sequence, read N- to C-terminus: Kappa-sparatoxin-Hv1e (29 aa).

Cystine bridges form between Cys3–Cys17, Cys10–Cys22, and Cys16–Cys26.

Expressed by the venom gland.

The protein resides in the secreted. Functionally, inhibitor of voltage-gated potassium channels of the Kv4/KCND family. Blocks calcium channels (Cav). This chain is Kappa-sparatoxin-Hv1e, found in Heteropoda venatoria (Brown huntsman spider).